The chain runs to 445 residues: NADH-quinone oxidoreductase subunit F (445 aa).

61-70 (GRGGAGFATG) lines the NAD(+) pocket. 177–224 (GAGAYICGEETALLDSLEGRRGQPRLRPPFPAVAGLYGCPTVINNVET) serves as a coordination point for FMN. [4Fe-4S] cluster-binding residues include Cys353, Cys356, Cys359, and Cys399.

Belongs to the complex I 51 kDa subunit family. FMN is required as a cofactor. Requires [4Fe-4S] cluster as cofactor.

The enzyme catalyses a quinone + NADH + 5 H(+)(in) = a quinol + NAD(+) + 4 H(+)(out). Its function is as follows. NDH-1 shuttles electrons from NADH, via FMN and iron-sulfur (Fe-S) centers, to quinones in the respiratory chain. The immediate electron acceptor for the enzyme in this species is believed to be menaquinone. Couples the redox reaction to proton translocation (for every two electrons transferred, four hydrogen ions are translocated across the cytoplasmic membrane), and thus conserves the redox energy in a proton gradient. This chain is NADH-quinone oxidoreductase subunit F (nuoF), found in Mycobacterium bovis (strain ATCC BAA-935 / AF2122/97).